Here is a 130-residue protein sequence, read N- to C-terminus: Small ribosomal subunit protein uS8 (130 aa).

This sequence belongs to the universal ribosomal protein uS8 family. In terms of assembly, part of the 30S ribosomal subunit. Contacts proteins S5 and S12.

Its function is as follows. One of the primary rRNA binding proteins, it binds directly to 16S rRNA central domain where it helps coordinate assembly of the platform of the 30S subunit. This is Small ribosomal subunit protein uS8 from Pseudomonas entomophila (strain L48).